Consider the following 163-residue polypeptide: 3-hydroxyacyl-[acyl-carrier-protein] dehydratase FabZ (163 aa).

Residue histidine 58 is part of the active site.

This sequence belongs to the thioester dehydratase family. FabZ subfamily.

It is found in the cytoplasm. It catalyses the reaction a (3R)-hydroxyacyl-[ACP] = a (2E)-enoyl-[ACP] + H2O. In terms of biological role, involved in unsaturated fatty acids biosynthesis. Catalyzes the dehydration of short chain beta-hydroxyacyl-ACPs and long chain saturated and unsaturated beta-hydroxyacyl-ACPs. The chain is 3-hydroxyacyl-[acyl-carrier-protein] dehydratase FabZ from Francisella philomiragia subsp. philomiragia (strain ATCC 25017 / CCUG 19701 / FSC 153 / O#319-036).